Here is a 67-residue protein sequence, read N- to C-terminus: Non-specific lipid-transfer protein 2 (67 aa).

4 disulfides stabilise this stretch: Cys-3/Cys-35, Cys-11/Cys-25, Cys-26/Cys-61, and Cys-37/Cys-67.

Belongs to the plant LTP family. As to quaternary structure, monomer. In terms of processing, disulfide bonds.

Its function is as follows. Plant non-specific lipid-transfer proteins transfer phospholipids as well as galactolipids across membranes. May play a role in wax or cutin deposition in the cell walls of expanding epidermal cells and certain secretory tissues. This Apium graveolens var. rapaceum (Celeriac) protein is Non-specific lipid-transfer protein 2.